We begin with the raw amino-acid sequence, 359 residues long: Tropomodulin-1 (359 aa).

The segment at 36-61 is disordered; sequence ELDPDNALLPAGLRQKDQTTKAPTGP. The interval 39–138 is tropomyosin-binding; sequence PDNALLPAGL…CDIAAILGMH (100 aa).

This sequence belongs to the tropomodulin family. In terms of assembly, binds to the N-terminus of tropomyosin and to actin. Interacts with FLII. As to expression, highly expressed in the erythrocyte, heart and skeletal muscle.

It localises to the cytoplasm. It is found in the cytoskeleton. Functionally, blocks the elongation and depolymerization of the actin filaments at the pointed end. The Tmod/TM complex contributes to the formation of the short actin protofilament, which in turn defines the geometry of the membrane skeleton. May play an important role in regulating the organization of actin filaments by preferentially binding to a specific tropomyosin isoform at its N-terminus. This Homo sapiens (Human) protein is Tropomodulin-1 (TMOD1).